Here is a 142-residue protein sequence, read N- to C-terminus: Large ribosomal subunit protein uL13 (142 aa).

It belongs to the universal ribosomal protein uL13 family. In terms of assembly, part of the 50S ribosomal subunit.

In terms of biological role, this protein is one of the early assembly proteins of the 50S ribosomal subunit, although it is not seen to bind rRNA by itself. It is important during the early stages of 50S assembly. The chain is Large ribosomal subunit protein uL13 from Yersinia enterocolitica serotype O:8 / biotype 1B (strain NCTC 13174 / 8081).